The chain runs to 381 residues: Cytochrome b (381 aa).

The next 4 membrane-spanning stretches (helical) occupy residues 34 to 54, 78 to 99, 114 to 134, and 179 to 199; these read FGSL…FLAM, WLIR…YLHI, WNIG…GYVL, and FFAF…IHLL. Positions 84 and 98 each coordinate heme b. Heme b contacts are provided by H183 and H197. H202 lines the a ubiquinone pocket. A run of 4 helical transmembrane segments spans residues 227–247, 289–309, 321–341, and 348–368; these read YKDL…ALFM, LGGV…PLLH, LTQI…WIGG, and FITV…IIMP.

This sequence belongs to the cytochrome b family. As to quaternary structure, the cytochrome bc1 complex contains 3 respiratory subunits (MT-CYB, CYC1 and UQCRFS1), 2 core proteins (UQCRC1 and UQCRC2) and probably 6 low-molecular weight proteins. Heme b serves as cofactor.

It is found in the mitochondrion inner membrane. Functionally, component of the ubiquinol-cytochrome c reductase complex (complex III or cytochrome b-c1 complex) that is part of the mitochondrial respiratory chain. The b-c1 complex mediates electron transfer from ubiquinol to cytochrome c. Contributes to the generation of a proton gradient across the mitochondrial membrane that is then used for ATP synthesis. The sequence is that of Cytochrome b (mt-cyb) from Sphyrna tiburo tiburo (Hammerhead shark).